We begin with the raw amino-acid sequence, 86 residues long: Small ribosomal subunit protein bS16 (86 aa).

The protein belongs to the bacterial ribosomal protein bS16 family.

The sequence is that of Small ribosomal subunit protein bS16 from Syntrophotalea carbinolica (strain DSM 2380 / NBRC 103641 / GraBd1) (Pelobacter carbinolicus).